The primary structure comprises 428 residues: Serine--tRNA ligase (428 aa).

235–237 (TAE) provides a ligand contact to L-serine. An ATP-binding site is contributed by 266-268 (RSE). Residue glutamate 289 participates in L-serine binding. An ATP-binding site is contributed by 353–356 (EISS). Serine 389 serves as a coordination point for L-serine.

It belongs to the class-II aminoacyl-tRNA synthetase family. Type-1 seryl-tRNA synthetase subfamily. In terms of assembly, homodimer. The tRNA molecule binds across the dimer.

It localises to the cytoplasm. The catalysed reaction is tRNA(Ser) + L-serine + ATP = L-seryl-tRNA(Ser) + AMP + diphosphate + H(+). It carries out the reaction tRNA(Sec) + L-serine + ATP = L-seryl-tRNA(Sec) + AMP + diphosphate + H(+). The protein operates within aminoacyl-tRNA biosynthesis; selenocysteinyl-tRNA(Sec) biosynthesis; L-seryl-tRNA(Sec) from L-serine and tRNA(Sec): step 1/1. Functionally, catalyzes the attachment of serine to tRNA(Ser). Is also able to aminoacylate tRNA(Sec) with serine, to form the misacylated tRNA L-seryl-tRNA(Sec), which will be further converted into selenocysteinyl-tRNA(Sec). This is Serine--tRNA ligase from Shewanella baltica (strain OS185).